The primary structure comprises 1360 residues: Transmembrane protein 94 (1360 aa).

Residues 1–64 (MDLREKHLGE…FLHLSNRCSC (64 aa)) lie on the Cytoplasmic side of the membrane. The chain crosses the membrane as a helical span at residues 65–85 (FHWPGASLMLLAVLLLLCCCG). Residues 86 to 92 (GQPAGSQ) are Lumenal-facing. Residues 93 to 113 (GVELVNASALFLLLLLNLVLI) traverse the membrane as a helical segment. The Cytoplasmic segment spans residues 114–273 (GRQDRLKRRE…RPVTALDNER (160 aa)). Ser221 and Ser225 each carry phosphoserine. Residues 274–294 (FTVQSVMLHYAVPVVLAGFLI) form a helical membrane-spanning segment. Residues 295-320 (TNALRFMFKAPGVTSWQYTLLQLQVN) lie on the Lumenal side of the membrane. The helical transmembrane segment at 321-341 (GMLPILPLLFPVLWVLATACG) threads the bilayer. Over 342 to 1096 (EARVLAQMSK…RHATYGIRKC (755 aa)) the chain is Cytoplasmic. The DKQGIL signature appears at 417 to 422 (DKQGIL). Phosphoserine occurs at positions 444, 445, and 454. Positions 487 to 545 (EQERSDWLADGPKPSEPYPHHKGHGRSKHPSGSNVSFSRDTEGGEEEPSKAQPGTEGDP) are disordered. Over residues 506 to 515 (HHKGHGRSKH) the composition is skewed to basic residues. Residues Ser517, Ser522, Ser802, and Ser945 each carry the phosphoserine modification. The chain crosses the membrane as a helical span at residues 1097–1117 (FLFLLQCQLTLVVIQFLSCLV). The Lumenal segment spans residues 1118-1124 (QLPPLLS). A helical membrane pass occupies residues 1125–1145 (TTDILWLSCFCYPLLSISLLG). The Cytoplasmic segment spans residues 1146–1171 (KPPHSSIMSMATGKNLQSIPKKTQHY). The helical transmembrane segment at 1172–1192 (FLLCFLLKFSLTISSCLVCFG) threads the bilayer. The Lumenal segment spans residues 1193-1232 (FTLQSFCDSARARNLTNCSSVMLCSNDDRAPAWFEDFANG). N-linked (GlcNAc...) asparagine glycans are attached at residues Asn1206 and Asn1209. Residues 1233 to 1253 (LLSAQKLTAALIVLHTVFISI) form a helical membrane-spanning segment. The Cytoplasmic segment spans residues 1254-1269 (THVHRTKPLWRKSPLT). The chain crosses the membrane as a helical span at residues 1270 to 1290 (NLWWAVTVPVVLLGQVVQTVV). Residues 1291–1310 (DLQLWTHRDSRVHFGLEDVP) lie on the Lumenal side of the membrane. The helical transmembrane segment at 1311–1331 (LLTWLLGCLSLVLVVVTNEIV) threads the bilayer. Over 1332–1360 (KLHEIRVRVRYQKRQKLQFETKLGMNSPF) the chain is Cytoplasmic. Residues 1355–1357 (GMN) carry the GMN; metal-binding motif motif.

Forms homooligomers.

Its subcellular location is the endoplasmic reticulum membrane. Its function is as follows. Could function in the uptake of Mg(2+) from the cytosol into the endoplasmic reticulum and regulate intracellular Mg(2+) homeostasis. In Mus musculus (Mouse), this protein is Transmembrane protein 94.